A 181-amino-acid chain; its full sequence is TATA-box-binding protein (181 aa).

2 consecutive repeat copies span residues 7–83 and 98–173.

The protein belongs to the TBP family.

General factor that plays a role in the activation of archaeal genes transcribed by RNA polymerase. Binds specifically to the TATA box promoter element which lies close to the position of transcription initiation. This is TATA-box-binding protein from Methanococcus maripaludis (strain C6 / ATCC BAA-1332).